Reading from the N-terminus, the 644-residue chain is Phosphatidylinositol polyphosphate 5-phosphatase type IV (644 aa).

The segment at 1-193 is disordered; it reads MPSKAENLRP…RLPSLLPPRP (193 aa). 8 consecutive repeat copies span residues 10-13, 15-18, 28-31, 39-42, 55-58, 69-71, 72-74, and 75-78. The tract at residues 10–242 is 13 X 4 AA repeats of P-X-X-P; sequence PSEPAPQPPE…SLGPGRPRSP (233 aa). Positions 78 to 90 are enriched in basic and acidic residues; it reads PRLERALSLDDKG. At Ser99 the chain carries Phosphoserine. The span at 107-118 shows a compositional bias: polar residues; that stretch reads NGTSPSRGSVQS. Copy 9 of the repeat occupies 121 to 124; the sequence is PGAP. The segment covering 152 to 163 has biased composition (low complexity); the sequence is GSPSSGGNPLSG. 4 tandem repeats follow at residues 169–172, 183–185, 190–193, and 236–239. Residues Ser241 and Ser256 each carry the phosphoserine modification. Cys641 carries the cysteine methyl ester modification. Cys641 carries the S-farnesyl cysteine lipid modification. Residues 642-644 constitute a propeptide, removed in mature form; the sequence is SVS.

It belongs to the inositol 1,4,5-trisphosphate 5-phosphatase type IV family. As to quaternary structure, interacts (when prenylated) with PDE6D; this is important for normal location in cilia. Detected in brain, heart, pancreas, testis and spleen.

Its subcellular location is the cytoplasm. It localises to the cytoskeleton. It is found in the cilium axoneme. The protein localises to the golgi apparatus. The protein resides in the golgi stack membrane. Its subcellular location is the cell membrane. It localises to the cell projection. It is found in the ruffle. The protein localises to the nucleus. It catalyses the reaction a 1,2-diacyl-sn-glycero-3-phospho-(1D-myo-inositol-4,5-bisphosphate) + H2O = a 1,2-diacyl-sn-glycero-3-phospho-(1D-myo-inositol 4-phosphate) + phosphate. The enzyme catalyses a 1,2-diacyl-sn-glycero-3-phospho-(1D-myo-inositol-3,4,5-trisphosphate) + H2O = a 1,2-diacyl-sn-glycero-3-phospho-(1D-myo-inositol-3,4-bisphosphate) + phosphate. The catalysed reaction is a 1,2-diacyl-sn-glycero-3-phospho-(1D-myo-inositol-3,5-bisphosphate) + H2O = a 1,2-diacyl-sn-glycero-3-phospho-(1D-myo-inositol-3-phosphate) + phosphate. With respect to regulation, active in the presence of octyl-glucoside or Triton X-100, but completely inhibited by CTAB. Phosphatidylinositol (PtdIns) phosphatase that specifically hydrolyzes the 5-phosphate of phosphatidylinositol-3,4,5-trisphosphate (PtdIns(3,4,5)P3), phosphatidylinositol 4,5-bisphosphate (PtdIns(4,5)P2) and phosphatidylinositol 3,5-bisphosphate (PtdIns(3,5)P2). Specific for lipid substrates, inactive towards water soluble inositol phosphates. Plays an essential role in the primary cilium by controlling ciliary growth and phosphoinositide 3-kinase (PI3K) signaling and stability. This chain is Phosphatidylinositol polyphosphate 5-phosphatase type IV (INPP5E), found in Homo sapiens (Human).